The following is a 314-amino-acid chain: 4-hydroxy-3-methylbut-2-enyl diphosphate reductase (314 aa).

Cysteine 12 lines the [4Fe-4S] cluster pocket. (2E)-4-hydroxy-3-methylbut-2-enyl diphosphate is bound by residues histidine 43 and histidine 81. 2 residues coordinate dimethylallyl diphosphate: histidine 43 and histidine 81. The isopentenyl diphosphate site is built by histidine 43 and histidine 81. Position 103 (cysteine 103) interacts with [4Fe-4S] cluster. Histidine 131 is a (2E)-4-hydroxy-3-methylbut-2-enyl diphosphate binding site. Histidine 131 is a binding site for dimethylallyl diphosphate. Histidine 131 contributes to the isopentenyl diphosphate binding site. Glutamate 133 serves as the catalytic Proton donor. Threonine 170 contacts (2E)-4-hydroxy-3-methylbut-2-enyl diphosphate. Position 198 (cysteine 198) interacts with [4Fe-4S] cluster. Serine 226, asparagine 228, and serine 271 together coordinate (2E)-4-hydroxy-3-methylbut-2-enyl diphosphate. The dimethylallyl diphosphate site is built by serine 226, asparagine 228, and serine 271. 3 residues coordinate isopentenyl diphosphate: serine 226, asparagine 228, and serine 271.

The protein belongs to the IspH family. [4Fe-4S] cluster serves as cofactor.

It carries out the reaction isopentenyl diphosphate + 2 oxidized [2Fe-2S]-[ferredoxin] + H2O = (2E)-4-hydroxy-3-methylbut-2-enyl diphosphate + 2 reduced [2Fe-2S]-[ferredoxin] + 2 H(+). It catalyses the reaction dimethylallyl diphosphate + 2 oxidized [2Fe-2S]-[ferredoxin] + H2O = (2E)-4-hydroxy-3-methylbut-2-enyl diphosphate + 2 reduced [2Fe-2S]-[ferredoxin] + 2 H(+). It participates in isoprenoid biosynthesis; dimethylallyl diphosphate biosynthesis; dimethylallyl diphosphate from (2E)-4-hydroxy-3-methylbutenyl diphosphate: step 1/1. It functions in the pathway isoprenoid biosynthesis; isopentenyl diphosphate biosynthesis via DXP pathway; isopentenyl diphosphate from 1-deoxy-D-xylulose 5-phosphate: step 6/6. Functionally, catalyzes the conversion of 1-hydroxy-2-methyl-2-(E)-butenyl 4-diphosphate (HMBPP) into a mixture of isopentenyl diphosphate (IPP) and dimethylallyl diphosphate (DMAPP). Acts in the terminal step of the DOXP/MEP pathway for isoprenoid precursor biosynthesis. This Bacillus subtilis (strain 168) protein is 4-hydroxy-3-methylbut-2-enyl diphosphate reductase.